Reading from the N-terminus, the 179-residue chain is MSTEFNQVNKLKKTPRRNDNLNEAKFVERLIKISRVTKVTKGGKKLSFRAVVVIGDENGKVGVGVGKAEDVVNAFKKAKTDGRKNLIDVPITKSLSIPHAVIGDLGACKIIMRPSIEGSGVIAGGAVRTVLEVAGIKNVIAKQLGSDNLLNNARTAIVALESLTTLDEVKRKRYHKSVL.

The S5 DRBM domain maps to 26-89 (FVERLIKISR…TDGRKNLIDV (64 aa)).

The protein belongs to the universal ribosomal protein uS5 family. As to quaternary structure, part of the 30S ribosomal subunit. Contacts protein S4.

Its subcellular location is the plastid. The protein resides in the chloroplast. Functionally, with S4 and S12 plays an important role in translational accuracy. This is Small ribosomal subunit protein uS5c (rps5) from Thalassiosira pseudonana (Marine diatom).